A 442-amino-acid polypeptide reads, in one-letter code: MFDTIAAIATGNSIQAISIIRISGSDSFKIVKKIFTGKIGKNKTITYGNILNHERKIVDEVLVAWFEGTNNFTGENSVEIFCHGGIVVTNLVLQLLIANGARLAERGEFSRRSFLNKKMDFVKAEAINDLIHAKTIRQAQISVNKFDGKISKDIESYIDTLLYLIATCETNIDYPEYDDVENLHNETLLPKIKELIQKLNDLIKISEKASIIYNGLKIAIVGKPNVGKSSLLNALLNEERAIVTNEAGTTRDVIEASFQIDGFLFSISDTAGLREVQNNIENLGIQKTFETIEKSDIILHIIQPNEAENDFDKQIEIKSKNKIYLKILNKKDLIKNHNKQNHMIKISTLNKDIIELENKLSSYCNDVEWDNPNLIYSQNQLSMIKKSYLALSEAKEGLESGLTPDVVIIDITKAWESLVNIKGKADNELLLDKMFSNFCLGK.

Residues R21, E79, and K118 each coordinate (6S)-5-formyl-5,6,7,8-tetrahydrofolate. Residues 215-365 (GLKIAIVGKP…LENKLSSYCN (151 aa)) form the TrmE-type G domain. Residues 225–230 (NVGKSS), 244–250 (TNEAGTT), and 269–272 (DTAG) contribute to the GTP site. Residues S229 and T250 each contribute to the Mg(2+) site. K442 is a (6S)-5-formyl-5,6,7,8-tetrahydrofolate binding site.

It belongs to the TRAFAC class TrmE-Era-EngA-EngB-Septin-like GTPase superfamily. TrmE GTPase family. Homodimer. Heterotetramer of two MnmE and two MnmG subunits. K(+) serves as cofactor.

It is found in the cytoplasm. Exhibits a very high intrinsic GTPase hydrolysis rate. Involved in the addition of a carboxymethylaminomethyl (cmnm) group at the wobble position (U34) of certain tRNAs, forming tRNA-cmnm(5)s(2)U34. This Mycoplasma mobile (strain ATCC 43663 / 163K / NCTC 11711) (Mesomycoplasma mobile) protein is tRNA modification GTPase MnmE.